A 153-amino-acid chain; its full sequence is Small ribosomal subunit protein uS17 (153 aa).

This sequence belongs to the universal ribosomal protein uS17 family.

This chain is Small ribosomal subunit protein uS17 (RpS11), found in Anopheles gambiae (African malaria mosquito).